The sequence spans 162 residues: Caveolin-2 (162 aa).

The Cytoplasmic portion of the chain corresponds to 1–86 (MGLETEKADV…FEMSKYVIYK (86 aa)). Tyr-19 is modified (phosphotyrosine; by SRC). Ser-20 and Ser-23 each carry phosphoserine. Tyr-27 is subject to Phosphotyrosine; by SRC. Positions 87–107 (FLTVFLAIPLAFAAGILFATL) form an intramembrane region, helical. Residues 108–162 (SCLHIWIIMPFVKTCLMVLPSVQTIWKSVTDVVIAPLCTSIGRSFSSVSLQLSHD) are Cytoplasmic-facing.

Belongs to the caveolin family. As to quaternary structure, monomer or homodimer. Interacts with CAV1; the interaction forms a stable heterooligomeric complex that is required for targeting to lipid rafts and for caveolae formation. Tyrosine phosphorylated forms do not form heterooligomers with the Tyr-19-phosphorylated form existing as a monomer or dimer, and the Tyr-27-form as a monomer only. Interacts (tyrosine phosphorylated form) with the SH2 domain-containing proteins, RASA1, NCK1 and SRC. Interacts (tyrosine phosphorylated form) with INSR, the interaction (Tyr-27-phosphorylated form) is increased on insulin stimulation. Interacts (Tyr-19 phosphorylated form) with MAPK1 (phosphorylated form); the interaction, promoted by insulin, leads to nuclear location and MAPK1 activation. Interacts with STAT3; the interaction is increased on insulin-induced tyrosine phosphorylation leading to STAT activation. In terms of processing, phosphorylated on serine and tyrosine residues. CAV1 promotes phosphorylation on Ser-23 which then targets the complex to the plasma membrane, lipid rafts and caveolae. Phosphorylation on both Tyr-19 and Tyr-27 is required for insulin-induced 'Ser-727' phosphorylation of STAT3 and its activation. Phosphorylation on Tyr-19 is required for insulin-induced phosphorylation of MAPK1 and DNA binding of STAT3. Tyrosine phosphorylation is induced by both EGF and insulin. As to expression, expressed in aortic endothelial cells.

Its subcellular location is the nucleus. The protein resides in the cytoplasm. It is found in the golgi apparatus membrane. The protein localises to the cell membrane. It localises to the membrane. Its subcellular location is the caveola. Its function is as follows. May act as a scaffolding protein within caveolar membranes. Interacts directly with G-protein alpha subunits and can functionally regulate their activity. Acts as an accessory protein in conjunction with CAV1 in targeting to lipid rafts and driving caveolae formation. Positive regulator of cellular mitogenesis of the MAPK signaling pathway. Required for the insulin-stimulated nuclear translocation and activation of MAPK1 and STAT3, and the subsequent regulation of cell cycle progression. In Bos taurus (Bovine), this protein is Caveolin-2 (CAV2).